The sequence spans 332 residues: L-lactate dehydrogenase C chain (332 aa).

NAD(+)-binding positions include 29 to 57 and R99; that span reads GAVG…AVDK. Residues R106, N138, and R169 each contribute to the substrate site. Residue N138 participates in NAD(+) binding. H193 (proton acceptor) is an active-site residue. Substrate is bound at residue T248. The residue at position 301 (S301) is a Phosphoserine.

This sequence belongs to the LDH/MDH superfamily. LDH family. In terms of assembly, homotetramer. Interacts with RABL2/RABL2A; binds preferentially to GTP-bound RABL2.

Its subcellular location is the cytoplasm. It carries out the reaction (S)-lactate + NAD(+) = pyruvate + NADH + H(+). It functions in the pathway fermentation; pyruvate fermentation to lactate; (S)-lactate from pyruvate: step 1/1. Functionally, possible role in sperm motility. The protein is L-lactate dehydrogenase C chain (LDHC) of Sus scrofa (Pig).